The following is a 49-amino-acid chain: FFECTFECDIKKEGKPCKPKGCKCKDKDNKDHKKCSGGWRCKLKLCLKF.

4 disulfides stabilise this stretch: cysteine 4/cysteine 17, cysteine 8/cysteine 41, cysteine 22/cysteine 24, and cysteine 35/cysteine 46.

It belongs to the neurotoxin 12 (Hwtx-2) family. 04 (lasiotoxin) subfamily. In terms of tissue distribution, expressed by the venom gland.

The protein localises to the secreted. Functionally, toxin that causes irreversible contractile paralysis into adult Aedes aegypti resulting in 100% mortality after 24 hours. The sequence is that of U-theraphotoxin-Lk2a from Lasiodora klugi (Bahia scarlet tarantula).